Reading from the N-terminus, the 385-residue chain is tRNA (guanine-N(7)-)-methyltransferase non-catalytic subunit wuho (385 aa).

WD repeat units follow at residues 68-108 (KVEV…AKLL), 155-194 (GHLS…DIHS), and 198-236 (GHKE…ELLH).

This sequence belongs to the WD repeat TRM82 family. In terms of assembly, forms a heterodimer with the catalytic subunit Mettl1. Interacts with mei-P26 and weakly interacts with bgcn; required for the function or formation of the mei-P26-bgcn-bam-sxl complex. Interacts with nanos; may be involved in mei-P26-dependent derepression of the BMP signaling pathway. Interacts with Myc; the interaction may be mediated by mei-P26 and may be involved in the regulation of ribosome biogenesis. As to expression, in testis, it is present at high level in hub cells, a niche for germline stem cells of testis. Ubiquitously expressed in all testicular cells throughout spermatogenesis. Ubiquitously expressed in all germline and somatic cells of the ovary.

It is found in the nucleus. It localises to the cytoplasm. The protein operates within tRNA modification; N(7)-methylguanine-tRNA biosynthesis. Functionally, required for the Mettl1-dependent formation of N(7)-methylguanine at position 46 (m7G46) in tRNA. In the Mettl1-wuho methyltransferase complex, it is required to stabilize and induce conformational changes of the catalytic subunit. Required for binding of nanos mRNA and repression of translation by the mei-P26-bgcn-bam-sxl complex. May cooperate with mei-P26 and nanos to derepress the BMP signaling pathway. May cooperate with mei-P26 to suppress expression of a subset of microRNAs. May cooperate with mei-P26 to regulate bam expression levels in germline cells during gametogenesis. Required to promote mitosis to meiosis transition during gametogenesis. May regulate germline cell division in part by regulating ribosome biogenesis. This Drosophila grimshawi (Hawaiian fruit fly) protein is tRNA (guanine-N(7)-)-methyltransferase non-catalytic subunit wuho.